The primary structure comprises 314 residues: Inactive chitinase-like protein 1 (314 aa).

The signal sequence occupies residues 1 to 19 (MKEIVRALEGYGPPKDKAA). Residues 20-60 (EQCGWQAGGALCPGGLCCSQYGWCANTPEYCGSGCQSQCDG) enclose the Chitin-binding type-1 domain. 7 cysteine pairs are disulfide-bonded: Cys-22–Cys-37, Cys-31–Cys-43, Cys-36–Cys-50, Cys-54–Cys-58, Cys-92–Cys-154, Cys-166–Cys-174, and Cys-273–Cys-305.

The protein belongs to the glycosyl hydrolase 19 family. Chitinase class I subfamily.

Inactive chitinase-like protein that does not exhibit hydrolytic activity toward chitin. Binds strongly to chitin and possesses antifungal activity toward the fungal pathogen Altenaria alternata in plate assays. Inhibits the growth of Fusarium oxysporum on plate assays. Probably involved in defense against fungal pathogens through a mechanism that only involves carbohydrate binding. This Hevea brasiliensis (Para rubber tree) protein is Inactive chitinase-like protein 1.